The primary structure comprises 523 residues: Protein NAM8 (523 aa).

A disordered region spans residues 1–35; that stretch reads MSYKQTTYYPSRGNLVRNDSSPYTNTISSETNNSS. A compositionally biased stretch (low complexity) spans 24–35; that stretch reads TNTISSETNNSS. 3 RRM domains span residues 54-145, 163-242, and 313-385; these read NQLY…WATS, CSIF…PTSG, and TTVF…WGRS. A disordered region spans residues 239 to 260; that stretch reads PTSGQQQHVSGNNDYNRSSSSL. Residues 240–260 show a composition bias toward polar residues; that stretch reads TSGQQQHVSGNNDYNRSSSSL.

In terms of assembly, component of the U1 small nuclear ribonucleoprotein complex (U1 snRNP).

Functionally, component of the U1 small nuclear ribonucleoprotein complex (U1 snRNP) involved in the initiation of meiotic recombination. Involved in the formation of DSBs at recombination hot-spots through meiosis-specific splicing of REC107 pre-mRNA. Collaborates with MER1 to promote splicing of essential meiotic mRNAs REC10, AMA1, MER3, HFM1, SPO22 and PCH2. NAM8 interacts with the pre-mRNA downstream of the 5' splice site, in a region of non-conserved sequence and is required for efficient splicing of uncapped RNA precursor. The polypeptide is Protein NAM8 (Saccharomyces cerevisiae (strain ATCC 204508 / S288c) (Baker's yeast)).